The sequence spans 262 residues: tRNA pseudouridine synthase A (262 aa).

The active-site Nucleophile is D51. Residue Y109 participates in substrate binding.

This sequence belongs to the tRNA pseudouridine synthase TruA family. Homodimer.

The enzyme catalyses uridine(38/39/40) in tRNA = pseudouridine(38/39/40) in tRNA. Its function is as follows. Formation of pseudouridine at positions 38, 39 and 40 in the anticodon stem and loop of transfer RNAs. The polypeptide is tRNA pseudouridine synthase A (Dechloromonas aromatica (strain RCB)).